Consider the following 250-residue polypeptide: 2,5-dichloro-2,5-cyclohexadiene-1,4-diol dehydrogenase (250 aa).

9–34 is a binding site for NAD(+); it reads IIVTGGGSGIGRATVELLVASGANVA. Residue S141 participates in substrate binding. Y154 acts as the Proton acceptor in catalysis.

This sequence belongs to the short-chain dehydrogenases/reductases (SDR) family.

The enzyme catalyses 2,5-dichlorocyclohexa-2,5-dien-1,4-diol + NAD(+) = 2,5-dichlorohydroquinone + NADH + H(+). It functions in the pathway xenobiotic degradation; gamma-hexachlorocyclohexane degradation. Catalyzes the dehydrogenation of 2,5-dichloro-2,5-cyclohexadiene-1,4-diol (2,5-DDOL) to 2,5-dichlorohydroquinone (2,5-DCHQ), a step in the degradation of gamma-hexachlorocyclohexane (gamma-HCH or lindane). Has an essential role in this assimilation pathway that allows S.japonicum UT26 to grow on gamma-HCH as the sole source of carbon and energy. This Sphingobium indicum (strain DSM 16413 / CCM 7287 / MTCC 6362 / UT26 / NBRC 101211 / UT26S) (Sphingobium japonicum) protein is 2,5-dichloro-2,5-cyclohexadiene-1,4-diol dehydrogenase.